A 362-amino-acid chain; its full sequence is MKASILIKLETLVERYEEVQHLLGDPDVLGNQDKFRALSKEYSQLEEVTGCFKSYQQAQEDLEAAEEMANEDDAEMREMAQEEIKDAKANIERLTDELQILLIPKDPNDERNCFLEIRAGAGGDEAGIFAGNLFRMYSKFAEKKGWRVEVMSSNVSEQGGFKEMIAKISGDAVYGTMKFESGGHRVQRVPETESQGRVHTSACTVAVMPEIPEADLPEIKAGDLKIDTFRASGAGGQHVNTTDSAIRITHLPTGTVVECQDERSQHKNKAKAMAVLAARIVQAEEERRAAAISDTRRNLLGSGDRSDRIRTYNYPQGRVSDHRINLTIYRLNEVLEGDMQSLLDPVLQEHQADQLAALAEHN.

Q237 carries the post-translational modification N5-methylglutamine.

It belongs to the prokaryotic/mitochondrial release factor family. Methylated by PrmC. Methylation increases the termination efficiency of RF1.

It localises to the cytoplasm. In terms of biological role, peptide chain release factor 1 directs the termination of translation in response to the peptide chain termination codons UAG and UAA. The sequence is that of Peptide chain release factor 1 from Vibrio atlanticus (strain LGP32) (Vibrio splendidus (strain Mel32)).